The following is a 308-amino-acid chain: Cytochrome b (308 aa).

The next 4 membrane-spanning stretches (helical) occupy residues 1-21 (FGSL…LMAM), 45-66 (WLIR…YLHI), 81-101 (WNTG…GYVL), and 146-166 (FFAL…IHLT). Heme b is bound by residues His-51 and His-65. Positions 150 and 164 each coordinate heme b. Residue His-169 participates in a ubiquinone binding. The next 3 helical transmembrane spans lie at 194 to 214 (TKDI…AMFS), 256 to 276 (LGGV…PFLH), and 288 to 308 (LSQL…WVGS).

Belongs to the cytochrome b family. The cytochrome bc1 complex contains 11 subunits: 3 respiratory subunits (MT-CYB, CYC1 and UQCRFS1), 2 core proteins (UQCRC1 and UQCRC2) and 6 low-molecular weight proteins (UQCRH/QCR6, UQCRB/QCR7, UQCRQ/QCR8, UQCR10/QCR9, UQCR11/QCR10 and a cleavage product of UQCRFS1). This cytochrome bc1 complex then forms a dimer. It depends on heme b as a cofactor.

The protein localises to the mitochondrion inner membrane. Functionally, component of the ubiquinol-cytochrome c reductase complex (complex III or cytochrome b-c1 complex) that is part of the mitochondrial respiratory chain. The b-c1 complex mediates electron transfer from ubiquinol to cytochrome c. Contributes to the generation of a proton gradient across the mitochondrial membrane that is then used for ATP synthesis. This is Cytochrome b (MT-CYB) from Asthenes dorbignyi (Creamy-breasted canastero).